The sequence spans 906 residues: Disintegrin and metalloproteinase domain-containing protein 22 (906 aa).

The signal sequence occupies residues 1–25; sequence MQAAVAVSVPFLLLCVLGTCPPARC. The propeptide occupies 26–222; that stretch reads GQAGDASLME…KFILKPRPKR (197 aa). Asparagine 175 carries N-linked (GlcNAc...) asparagine glycosylation. The Extracellular segment spans residues 223 to 736; the sequence is SKRQLRRYPR…LSGNGVAGTN (514 aa). One can recognise a Peptidase M12B domain in the interval 239–438; the sequence is KYIELMIVND…GGGACLFNKP (200 aa). Intrachain disulfides connect cysteine 349–cysteine 433, cysteine 392–cysteine 417, cysteine 394–cysteine 401, cysteine 447–cysteine 477, cysteine 458–cysteine 474, cysteine 460–cysteine 466, cysteine 473–cysteine 494, cysteine 485–cysteine 491, cysteine 490–cysteine 516, cysteine 503–cysteine 523, cysteine 510–cysteine 542, cysteine 535–cysteine 547, cysteine 554–cysteine 605, cysteine 569–cysteine 635, cysteine 583–cysteine 593, cysteine 600–cysteine 663, and cysteine 657–cysteine 668. Positions 444–531 constitute a Disintegrin domain; sequence PPECGNGFIE…QCAPNIHKMD (88 aa). Asparagine 519 carries N-linked (GlcNAc...) asparagine glycosylation. Residue asparagine 634 is glycosylated (N-linked (GlcNAc...) asparagine). An N-linked (GlcNAc...) asparagine glycan is attached at asparagine 675. The 38-residue stretch at 675–712 folds into the EGF-like domain; that stretch reads NFSTCLSSKEGTICSGNGVCSNELKCVCNRHWIGSDCN. Disulfide bonds link cysteine 679–cysteine 694, cysteine 688–cysteine 700, and cysteine 702–cysteine 711. A helical membrane pass occupies residues 737–757; that stretch reads IIIGIIAGTILVLALILGITA. The Cytoplasmic portion of the chain corresponds to 758–906; it reads WGYKNYREQR…QSARLWETSI (149 aa). The disordered stretch occupies residues 785-906; it reads YSDIPPGVST…QSARLWETSI (122 aa). Residues 793-810 show a composition bias toward low complexity; it reads STNSASSSKKRSNGLSHS. Residue serine 810 is modified to Phosphoserine. Residues 811–829 are compositionally biased toward basic and acidic residues; sequence WSERIPDTKHISDICENGR. Residue serine 834 is modified to Phosphoserine. Residues 842-853 are compositionally biased toward basic residues; the sequence is NKKKIRGKRFRP. Phosphoserine occurs at positions 857, 862, 866, and 870. Over residues 862–877 the composition is skewed to low complexity; that stretch reads SPAKSPSSSTGSIASS.

Interacts with LGI1. Interacts with DLG4/PSD95. Also binds LGI4. Interacts with KCNA2 and DLG2. Interacts with ADAM11. Interacts (via C-terminus) with YWHAB/14-3-3 beta. Interacts (via C-terminus) with YWHAZ/14-3-3 zeta. Post-translationally, the precursor is cleaved by a furin endopeptidase. Highly expressed in the brain and in some high-grade but not low-grade gliomas. Detected slightly or not at all in other tissues.

The protein resides in the cell membrane. The protein localises to the cell projection. It is found in the axon. Functionally, probable ligand for integrin in the brain. This is a non catalytic metalloprotease-like protein. Involved in regulation of cell adhesion and spreading and in inhibition of cell proliferation. Neuronal receptor for LGI1. The polypeptide is Disintegrin and metalloproteinase domain-containing protein 22 (ADAM22) (Homo sapiens (Human)).